The following is a 144-amino-acid chain: Augurin-B (144 aa).

The first 18 residues, 1 to 18 (MSLHSLCVPTILLISVLS), serve as a signal peptide directing secretion. A propeptide spanning residues 19-68 (ICLSSGGSSDSKLHRILIKRDAKEIESRPKAYISVQQSKAKEFLSGLHRT) is cleaved from the precursor. Residues 109-144 (RSNDQGRQHHHDENAPMSQQDPRYNRHGANVNYDYY) form a disordered region. Over residues 112 to 122 (DQGRQHHHDEN) the composition is skewed to basic and acidic residues.

This sequence belongs to the augurin family.

It is found in the secreted. The protein resides in the cytoplasm. It localises to the apical cell membrane. In terms of biological role, probable hormone. Required for the proper formation of the central nervous system by attenuating cell proliferation during development. The polypeptide is Augurin-B (Danio rerio (Zebrafish)).